We begin with the raw amino-acid sequence, 98 residues long: Small ribosomal subunit protein bS21B (98 aa).

The disordered stretch occupies residues 61–98 (KLQREGLLPMKPKPVFGAGAGGERGGRGGPGAGPRGPR). Gly residues predominate over residues 78–98 (AGAGGERGGRGGPGAGPRGPR).

The protein belongs to the bacterial ribosomal protein bS21 family.

In Bradyrhizobium diazoefficiens (strain JCM 10833 / BCRC 13528 / IAM 13628 / NBRC 14792 / USDA 110), this protein is Small ribosomal subunit protein bS21B.